The primary structure comprises 1217 residues: Splicing factor 3B subunit 3 (1217 aa).

2 interaction with PHF5A, SF3B1 and SF3B5 regions span residues 105–119 (ETFG…VPGQ) and 145–168 (NRDA…TLVY). Phosphoserine is present on serine 156. 2 interaction with SF3B1 and SF3B5 regions span residues 193–231 (DNDP…LEEH) and 786–804 (RKFV…ETDH). The interval 1028–1049 (TYPRWVTTASLLDYDTVAGADK) is interaction with SF3B1. The tract at residues 1100–1123 (TVLSLQKTTLIPGGSESLVYTTLS) is interaction with SF3B5. Residue threonine 1200 is modified to Phosphothreonine.

It belongs to the RSE1 family. As to quaternary structure, component of the 17S U2 SnRNP complex, a ribonucleoprotein complex that contains small nuclear RNA (snRNA) U2 and a number of specific proteins. Part of the SF3B subcomplex of the 17S U2 SnRNP complex. SF3B associates with the splicing subcomplex SF3A and a 12S RNA unit to form the U2 small nuclear ribonucleoproteins complex (U2 snRNP). Within the SF3B subcomplex, interacts directly with SF3B1 (via HEAT domain), SF3B5 and PHF5A. Identified in the spliceosome A complex; remains associated with the spliceosome throughout the splicing process. Component of the spliceosome B complex. Identified in the spliceosome C complex. Identified in the spliceosome E complex. Component of the minor (U12-type spliceosome) spliceosome. Within this complex, interacts with SCNM1. Associates with the STAGA transcription coactivator-HAT complex. Interacts with SUPT3H. Interacts with TAF3.

The protein localises to the nucleus. Functionally, component of the 17S U2 SnRNP complex of the spliceosome, a large ribonucleoprotein complex that removes introns from transcribed pre-mRNAs. The 17S U2 SnRNP complex (1) directly participates in early spliceosome assembly and (2) mediates recognition of the intron branch site during pre-mRNA splicing by promoting the selection of the pre-mRNA branch-site adenosine, the nucleophile for the first step of splicing. Within the 17S U2 SnRNP complex, SF3B3 is part of the SF3B subcomplex, which is required for 'A' complex assembly formed by the stable binding of U2 snRNP to the branchpoint sequence in pre-mRNA. Sequence independent binding of SF3A and SF3B subcomplexes upstream of the branch site is essential, it may anchor U2 snRNP to the pre-mRNA. May also be involved in the assembly of the 'E' complex. Also acts as a component of the minor spliceosome, which is involved in the splicing of U12-type introns in pre-mRNAs. The chain is Splicing factor 3B subunit 3 (SF3B3) from Bos taurus (Bovine).